A 600-amino-acid chain; its full sequence is 1-deoxy-D-xylulose-5-phosphate synthase (600 aa).

Thiamine diphosphate is bound by residues His63 and 104–106 (GHS). Asp135 provides a ligand contact to Mg(2+). Thiamine diphosphate is bound by residues 136–137 (GA), Asn164, Tyr271, and Glu352. Asn164 is a Mg(2+) binding site.

It belongs to the transketolase family. DXPS subfamily. Homodimer. Requires Mg(2+) as cofactor. The cofactor is thiamine diphosphate.

The enzyme catalyses D-glyceraldehyde 3-phosphate + pyruvate + H(+) = 1-deoxy-D-xylulose 5-phosphate + CO2. Its pathway is metabolic intermediate biosynthesis; 1-deoxy-D-xylulose 5-phosphate biosynthesis; 1-deoxy-D-xylulose 5-phosphate from D-glyceraldehyde 3-phosphate and pyruvate: step 1/1. Its function is as follows. Catalyzes the acyloin condensation reaction between C atoms 2 and 3 of pyruvate and glyceraldehyde 3-phosphate to yield 1-deoxy-D-xylulose-5-phosphate (DXP). This is 1-deoxy-D-xylulose-5-phosphate synthase from Campylobacter fetus subsp. fetus (strain 82-40).